The following is a 111-amino-acid chain: MTNFWILMLIAITISLASQFFIKKKYGIDKSGWRYKHVSNTHKWIEITLLILFVFSLSFFPVEYLLLLFFIVIDSIRIFMEWHYRPEDKQYMYHIVEVSLMFMLLIYVCTL.

3 consecutive transmembrane segments (helical) span residues 4–22, 49–71, and 91–108; these read FWILMLIAITISLASQFFI, LLILFVFSLSFFPVEYLLLLFFI, and YMYHIVEVSLMFMLLIYV.

The protein localises to the cell membrane. This is an uncharacterized protein from Bacillus subtilis (strain 168).